A 254-amino-acid chain; its full sequence is MASPSQDQIKVLEQSRQRLVQLTRSLGSLIGSLNQSDPLPSWSSLQSQASIISNNLLSVSEHLSDNCDLLSALVAYPGPEYPGRTQASTLEQLLRTKLDPRIEDWVARGRRAGASALEDKDALSETELAELWDWAPVEANQEARRRNWGGDYTLEEREMGIQNVVTGLRRQLEDDERDEDEDEDDEEEEEGEGEDEEMEVVGVRRRSDAGAGLGFDTAVPTPASSQQVQKGAGPVVPLDDVLRFMTTGTLPQQR.

Residues 154 to 190 (LEEREMGIQNVVTGLRRQLEDDERDEDEDEDDEEEEE) are a coiled coil. The tract at residues 167–234 (GLRRQLEDDE…SQQVQKGAGP (68 aa)) is disordered. Over residues 173–199 (EDDERDEDEDEDDEEEEEGEGEDEEME) the composition is skewed to acidic residues.

The protein belongs to the Mediator complex subunit 8 family. As to quaternary structure, component of the Mediator complex.

The protein localises to the nucleus. Functionally, component of the Mediator complex, a coactivator involved in the regulated transcription of nearly all RNA polymerase II-dependent genes. Mediator functions as a bridge to convey information from gene-specific regulatory proteins to the basal RNA polymerase II transcription machinery. Mediator is recruited to promoters by direct interactions with regulatory proteins and serves as a scaffold for the assembly of a functional preinitiation complex with RNA polymerase II and the general transcription factors. This chain is Mediator of RNA polymerase II transcription subunit 8 (med8), found in Aspergillus clavatus (strain ATCC 1007 / CBS 513.65 / DSM 816 / NCTC 3887 / NRRL 1 / QM 1276 / 107).